A 211-amino-acid chain; its full sequence is Large ribosomal subunit protein uL4 (211 aa).

Residues 40-80 (QQAHSRQGTASTLTRSEVRGGGRKPYKQKGTGRARQGSIRT) are disordered. Polar residues predominate over residues 41 to 54 (QAHSRQGTASTLTR). Over residues 60–71 (GGRKPYKQKGTG) the composition is skewed to basic residues.

Belongs to the universal ribosomal protein uL4 family. In terms of assembly, part of the 50S ribosomal subunit.

Functionally, one of the primary rRNA binding proteins, this protein initially binds near the 5'-end of the 23S rRNA. It is important during the early stages of 50S assembly. It makes multiple contacts with different domains of the 23S rRNA in the assembled 50S subunit and ribosome. Its function is as follows. Forms part of the polypeptide exit tunnel. The polypeptide is Large ribosomal subunit protein uL4 (Prochlorococcus marinus (strain MIT 9211)).